A 331-amino-acid polypeptide reads, in one-letter code: Ribosomal RNA small subunit methyltransferase H (331 aa).

Residues 49 to 51, D68, L102, D116, and Q123 each bind S-adenosyl-L-methionine; that span reads GGH.

This sequence belongs to the methyltransferase superfamily. RsmH family.

It is found in the cytoplasm. The catalysed reaction is cytidine(1402) in 16S rRNA + S-adenosyl-L-methionine = N(4)-methylcytidine(1402) in 16S rRNA + S-adenosyl-L-homocysteine + H(+). Functionally, specifically methylates the N4 position of cytidine in position 1402 (C1402) of 16S rRNA. The sequence is that of Ribosomal RNA small subunit methyltransferase H from Renibacterium salmoninarum (strain ATCC 33209 / DSM 20767 / JCM 11484 / NBRC 15589 / NCIMB 2235).